The chain runs to 225 residues: Histone-arginine methyltransferase METTL23 (225 aa).

This sequence belongs to the methyltransferase superfamily. METTL23 family. As to quaternary structure, interacts with HSPA5, HSP90B1, TUBULIN, UGGT1 and UGGT2. Interacts with TET3. Interacts with STPG4.

It localises to the nucleus. Its subcellular location is the cytoplasm. It catalyses the reaction L-arginyl-[protein] + 2 S-adenosyl-L-methionine = N(omega),N(omega)-dimethyl-L-arginyl-[protein] + 2 S-adenosyl-L-homocysteine + 2 H(+). Its function is as follows. Histone methyltransferase that dimethylates histone H3 at 'Arg-17', forming asymmetric dimethylarginine (H3R17me2a), leading to activate transcription via chromatin remodeling. Maternal factor involved in epigenetic chromatin reprogramming of the paternal genome in the zygote: mediates H3R17me2a, promoting histone H3.3 incorporation in the male pronucleus, leading to TET3 recruitment and subsequent DNA demethylation. The protein is Histone-arginine methyltransferase METTL23 of Rattus norvegicus (Rat).